Consider the following 83-residue polypeptide: RNA-binding protein Hfq (83 aa).

The region spanning 10-70 (DAFLNQVRKE…ISTVSPLKPV (61 aa)) is the Sm domain.

This sequence belongs to the Hfq family. Homohexamer.

RNA chaperone that binds small regulatory RNA (sRNAs) and mRNAs to facilitate mRNA translational regulation in response to envelope stress, environmental stress and changes in metabolite concentrations. Also binds with high specificity to tRNAs. The chain is RNA-binding protein Hfq from Pelotomaculum thermopropionicum (strain DSM 13744 / JCM 10971 / SI).